The sequence spans 353 residues: Dihydroorotate dehydrogenase (quinone) (353 aa).

Residues 67-71 (AGFDK) and T91 each bind FMN. Residue K71 participates in substrate binding. 116 to 120 (NRMGF) provides a ligand contact to substrate. N144 and N177 together coordinate FMN. N177 is a substrate binding site. S180 acts as the Nucleophile in catalysis. Residue N182 participates in substrate binding. Positions 213 and 241 each coordinate FMN. 242-243 (NT) is a substrate binding site. FMN-binding positions include G265, G294, and 315–316 (YT).

This sequence belongs to the dihydroorotate dehydrogenase family. Type 2 subfamily. In terms of assembly, monomer. It depends on FMN as a cofactor.

Its subcellular location is the cell membrane. The enzyme catalyses (S)-dihydroorotate + a quinone = orotate + a quinol. It functions in the pathway pyrimidine metabolism; UMP biosynthesis via de novo pathway; orotate from (S)-dihydroorotate (quinone route): step 1/1. Its function is as follows. Catalyzes the conversion of dihydroorotate to orotate with quinone as electron acceptor. The protein is Dihydroorotate dehydrogenase (quinone) of Mycobacteroides abscessus (strain ATCC 19977 / DSM 44196 / CCUG 20993 / CIP 104536 / JCM 13569 / NCTC 13031 / TMC 1543 / L948) (Mycobacterium abscessus).